The chain runs to 355 residues: cAMP-dependent protein kinase catalytic subunit PRKX (355 aa).

Residue methionine 1 is modified to N-acetylmethionine. Residues 1–42 (MEPPAGAAATVKDPDHDPVKTKVSAPAADPKPRTSSQKAGHS) form a disordered region. The Protein kinase domain occupies 46-300 (WDTIATVGTG…AEDIKRHRWF (255 aa)). ATP-binding positions include 52–60 (VGTGTFGRV) and lysine 75. The Proton acceptor role is filled by aspartate 169. The residue at position 200 (threonine 200) is a Phosphothreonine. The AGC-kinase C-terminal domain occupies 301 to 355 (RGVEWESVPQRKLKPPIVPKLSGDGDISNFETYPESELDKTPSVSDKDLETFKNF). Positions 316–355 (PIVPKLSGDGDISNFETYPESELDKTPSVSDKDLETFKNF) are disordered. The span at 337–355 (ELDKTPSVSDKDLETFKNF) shows a compositional bias: basic and acidic residues.

It belongs to the protein kinase superfamily. AGC Ser/Thr protein kinase family. cAMP subfamily. As to quaternary structure, like other cAMP-dependent protein kinases, the inactive holoenzyme is probably composed of 2 PRKX catalytic subunits and a dimer of regulatory subunits. Interacts (cAMP-dependent) specifically with the regulatory subunits PRKAR1A and PRKAR1B. Compared to other cAMP-dependent serine/threonine protein kinases, does not interact with the 2 other PKA regulatory subunits PRKAR2A and PRKAR2B. Interacts with PIN1 (via WW domain). Interacts with cAMP-dependent protein kinase inhibitor/PKI proteins; inhibits PRKX. Interacts with GPKOW. Interacts with SMAD6. Interacts with PKD1; involved in differentiation and controlled morphogenesis of the kidney. In terms of processing, phosphorylated; autophosphorylates in vitro. In terms of tissue distribution, widely expressed.

It localises to the cytoplasm. The protein localises to the nucleus. It catalyses the reaction L-seryl-[protein] + ATP = O-phospho-L-seryl-[protein] + ADP + H(+). The enzyme catalyses L-threonyl-[protein] + ATP = O-phospho-L-threonyl-[protein] + ADP + H(+). With respect to regulation, binding of cAMP to the PRKAR1A or PRKAR1B regulatory subunits induces dissociation of the holoenzyme heterotetramer. The released monomeric PRKX is then active and able to phosphorylate its substrates. Functionally, serine/threonine protein kinase regulated by and mediating cAMP signaling in cells. Acts through phosphorylation of downstream targets that may include CREB, SMAD6 and PKD1 and has multiple functions in cellular differentiation and epithelial morphogenesis. Regulates myeloid cell differentiation through SMAD6 phosphorylation. Involved in nephrogenesis by stimulating renal epithelial cell migration and tubulogenesis. Also involved in angiogenesis through stimulation of endothelial cell proliferation, migration and vascular-like structure formation. This chain is cAMP-dependent protein kinase catalytic subunit PRKX (Prkx), found in Mus musculus (Mouse).